The following is a 785-amino-acid chain: Phenylalanine--tRNA ligase beta subunit (785 aa).

Residues 39–148 (APAFSGVVIA…ADAPVGQSIR (110 aa)) form the tRNA-binding domain. The B5 domain occupies 399 to 474 (PKRQAVQLRA…RVYGYNNIPA (76 aa)). Asp452, Asp458, Glu461, and Glu462 together coordinate Mg(2+). One can recognise an FDX-ACB domain in the interval 692 to 784 (SKFQPVRRDL…AASELGAQLR (93 aa)).

Belongs to the phenylalanyl-tRNA synthetase beta subunit family. Type 1 subfamily. In terms of assembly, tetramer of two alpha and two beta subunits. Mg(2+) is required as a cofactor.

Its subcellular location is the cytoplasm. It catalyses the reaction tRNA(Phe) + L-phenylalanine + ATP = L-phenylalanyl-tRNA(Phe) + AMP + diphosphate + H(+). The protein is Phenylalanine--tRNA ligase beta subunit of Chromobacterium violaceum (strain ATCC 12472 / DSM 30191 / JCM 1249 / CCUG 213 / NBRC 12614 / NCIMB 9131 / NCTC 9757 / MK).